Here is a 271-residue protein sequence, read N- to C-terminus: Shikimate dehydrogenase (NADP(+)) (271 aa).

Residues 14–16 (SRS) and Thr-61 each bind shikimate. Lys-65 acts as the Proton acceptor in catalysis. The shikimate site is built by Asn-86 and Asp-102. NADP(+)-binding positions include 126–130 (GAGGA), 149–154 (NRTFSR), and Met-213. A shikimate-binding site is contributed by Tyr-215. Gly-238 contributes to the NADP(+) binding site.

This sequence belongs to the shikimate dehydrogenase family. Homodimer.

It catalyses the reaction shikimate + NADP(+) = 3-dehydroshikimate + NADPH + H(+). It participates in metabolic intermediate biosynthesis; chorismate biosynthesis; chorismate from D-erythrose 4-phosphate and phosphoenolpyruvate: step 4/7. Functionally, involved in the biosynthesis of the chorismate, which leads to the biosynthesis of aromatic amino acids. Catalyzes the reversible NADPH linked reduction of 3-dehydroshikimate (DHSA) to yield shikimate (SA). This Histophilus somni (strain 129Pt) (Haemophilus somnus) protein is Shikimate dehydrogenase (NADP(+)).